Reading from the N-terminus, the 220-residue chain is Uracil-DNA glycosylase 2 (220 aa).

Asp65 serves as the catalytic Proton acceptor.

The protein belongs to the uracil-DNA glycosylase (UDG) superfamily. UNG family.

The protein resides in the cytoplasm. It carries out the reaction Hydrolyzes single-stranded DNA or mismatched double-stranded DNA and polynucleotides, releasing free uracil.. Its function is as follows. Excises uracil residues from the DNA which can arise as a result of misincorporation of dUMP residues by DNA polymerase or due to deamination of cytosine. This is Uracil-DNA glycosylase 2 from Bacteroides fragilis (strain ATCC 25285 / DSM 2151 / CCUG 4856 / JCM 11019 / LMG 10263 / NCTC 9343 / Onslow / VPI 2553 / EN-2).